A 278-amino-acid polypeptide reads, in one-letter code: Urease accessory protein UreD (278 aa).

It belongs to the UreD family. As to quaternary structure, ureD, UreF and UreG form a complex that acts as a GTP-hydrolysis-dependent molecular chaperone, activating the urease apoprotein by helping to assemble the nickel containing metallocenter of UreC. The UreE protein probably delivers the nickel.

The protein localises to the cytoplasm. Functionally, required for maturation of urease via the functional incorporation of the urease nickel metallocenter. In Staphylococcus aureus (strain bovine RF122 / ET3-1), this protein is Urease accessory protein UreD.